A 1862-amino-acid chain; its full sequence is Protein RRP5 homolog (1862 aa).

The tract at residues methionine 1–lysine 56 is disordered. An N-acetylalanine modification is found at alanine 2. Serine 7 carries the phosphoserine modification. A compositionally biased stretch (basic residues) spans lysine 43 to lysine 56. 4 S1 motif domains span residues glycine 83–asparagine 171, glycine 187–glutamate 258, glycine 281–arginine 346, and glycine 365–arginine 436. Residue serine 438 is modified to Phosphoserine. S1 motif domains are found at residues glycine 453–lysine 522, glycine 542–arginine 611, glycine 636–lysine 707, glycine 729–arginine 798, and glycine 846–histidine 911. Residues serine 999 to valine 1036 are disordered. A compositionally biased stretch (basic and acidic residues) spans valine 1006 to glutamate 1019. Residues lysine 1020–asparagine 1033 are compositionally biased toward acidic residues. S1 motif domains lie at glycine 1047–proline 1120, glycine 1160–isoleucine 1233, glycine 1241–arginine 1309, and glycine 1335–leucine 1407. Disordered regions lie at residues leucine 1406–valine 1520 and arginine 1545–lysine 1577. 2 stretches are compositionally biased toward basic and acidic residues: residues proline 1423–lysine 1437 and arginine 1445–lysine 1454. A Glycyl lysine isopeptide (Lys-Gly) (interchain with G-Cter in SUMO2) cross-link involves residue lysine 1424. Phosphoserine occurs at positions 1468 and 1490. The span at lysine 1566–lysine 1577 shows a compositional bias: basic and acidic residues. HAT repeat units lie at residues glycine 1590–glutamine 1622, glutamate 1696–glycine 1728, glycine 1766–lysine 1798, and glycine 1800–glutamine 1835.

In terms of assembly, interacts with NF-kappa-B p50/NFKB1 and NF-kappa-B p65/RELA. In terms of tissue distribution, ubiquitous.

The protein resides in the nucleus. It localises to the nucleolus. In terms of biological role, essential for the generation of mature 18S rRNA, specifically necessary for cleavages at sites A0, 1 and 2 of the 47S precursor. Directly interacts with U3 snoRNA. This Mus musculus (Mouse) protein is Protein RRP5 homolog (Pdcd11).